Reading from the N-terminus, the 245-residue chain is UPF0319 protein VV0984 (245 aa).

The first 20 residues, 1 to 20 (MRYIGKWMMLGALVSSSVFA), serve as a signal peptide directing secretion.

This sequence belongs to the UPF0319 family.

This Vibrio vulnificus (strain YJ016) protein is UPF0319 protein VV0984.